Consider the following 501-residue polypeptide: Cytochrome P450 2J1 (501 aa).

C447 lines the heme pocket.

The protein belongs to the cytochrome P450 family. Heme is required as a cofactor. As to expression, small intestine.

The protein resides in the endoplasmic reticulum membrane. It localises to the microsome membrane. The enzyme catalyses an organic molecule + reduced [NADPH--hemoprotein reductase] + O2 = an alcohol + oxidized [NADPH--hemoprotein reductase] + H2O + H(+). Its function is as follows. Catalyzes the N-demethylation of benzphetamine to formaldehyde. The sequence is that of Cytochrome P450 2J1 (CYP2J1) from Oryctolagus cuniculus (Rabbit).